The chain runs to 485 residues: Neuropeptide F receptor (485 aa).

Topologically, residues 1–91 (MIISMNQTEP…DSPWYHMLIS (91 aa)) are extracellular. The helical transmembrane segment at 92-112 (MYGVLIVFGALGNTLVVIAVI) threads the bilayer. Over 113–122 (RKPIMRTARN) the chain is Cytoplasmic. A helical transmembrane segment spans residues 123–143 (LFILNLAISDLLLCLVTMPLT). Topologically, residues 144 to 163 (LMEILSKYWPYGSCSILCKT) are extracellular. C161 and C248 form a disulfide bridge. The chain crosses the membrane as a helical span at residues 164 to 184 (IAMLQALCIFVSTISITAIAF). At 185-202 (DRYQVIVYPTRDSLQFVG) the chain is on the cytoplasmic side. A helical membrane pass occupies residues 203–223 (AVTILAGIWALALLLASPLFV). Over 224-262 (YKELINTDTPALLQQIGLQDTIPYCIEDWPSRNGRFYYS) the chain is Extracellular. Residues 263–283 (IFSLCVQYLVPILIVSVAYFG) traverse the membrane as a helical segment. Topologically, residues 284–317 (IYNKLKSRITVVAVQASSAQRKVERGRRMKRTNC) are cytoplasmic. The helical transmembrane segment at 318–338 (LLISIAIIFGVSWLPLNFFNL) threads the bilayer. Over 339–355 (YADMERSPVTQSMLVRY) the chain is Extracellular. The helical transmembrane segment at 356–376 (AICHMIGMSSACSNPLLYGWL) threads the bilayer. Residues 377-485 (NDNFRKEFQE…PSEVTKLMPR (109 aa)) are Cytoplasmic-facing.

It belongs to the G-protein coupled receptor 1 family. In terms of tissue distribution, expressed in midgut, brain lobes and ventral nerve cord of larvae. In adults, expressed in a pair of dorsolateral neurons in the protocerebrum, and the central complex and a small number of neurons in the subesophageal ganglion (at protein level). Expressed in a subset of sugar-responsive PAIN neurons in the thoracic body but is absent from other peripheral PAIN neurons.

The protein resides in the membrane. Its function is as follows. Receptor for NPF. Integral part of the sensory system that mediates food signaling, providing the neural basis for the regulation of food response; coordinates larval foraging and social behavior changes during development. Required in dopaminergic (DA) neurons that innervate the mushroom body for satiety to suppress appetitive memory performance; a key factor in the internal state of hunger in the brain. NPF neurons coordinately modulate diverse sensory and motor neurons important for feeding, flight, and locomotion. NPF/NPFR pathway exerts its suppressive effect on larval aversion to diverse stressful stimuli (chemical stress and noxious heat) through attenuation of TRP channel-induced neuronal excitation. NPF neural signaling system plays a physiological role in acute modulation of alcohol sensitivity in adults, rather than a general response to intoxication by sedative agents. Activation and inhibition of the NPF system reduces and enhances ethanol preference, respectively. Sexual experience, the NPF system activity and ethanol consumption are all linked; sexual deprivation is a major contributor to enhanced ethanol preference. The polypeptide is Neuropeptide F receptor (Drosophila melanogaster (Fruit fly)).